Here is a 431-residue protein sequence, read N- to C-terminus: MDIVKQRYHELFDLRVRGPRMKMADRLEHFTWAWFASAMGTGGIGMVTSLYHFRFYGLNTLGKIIFIFQLSILTLYICCITFRFIRYPGTLSKTWKNPSEVLFMPTALLAIATSISNLYPYAFPYTGEWMVWLIRILYWIFVAVACIFVISLFYSLFHAHPFRINTIIPALVLPIFPCMICGVIASAIVESQPARQAKNMVVAGIAFQGLGFWIYIIVYAVNMCRFFTVGLQPAADRPGMFILVSPPSFTGLTLLDLAFGAKAKRPYIFVGDNSSEYLEFVATFMALFMIGLGIFNFCLAFVSVVAGFCTRQRIKFKVSWFAMIFANVGLVMDVQELGRAIDSKAVCIVGQVCGVTITIVWIILILLTLRAVYVQELLYPGKDEDIDTILPNVLEYYRHLEEEEKDEAERSKRKAEESDGKTTRELTSGGL.

Helical transmembrane passes span 30–50, 62–82, 101–121, 136–156, 167–187, 201–221, 239–259, 284–304, 318–338, and 346–366; these read FTWA…VTSL, GKII…CITF, VLFM…LYPY, ILYW…FYSL, IIPA…IASA, VVAG…VYAV, GMFI…DLAF, FMAL…FVSV, VSWF…QELG, and VCIV…ILIL. Basic and acidic residues predominate over residues 402–424; the sequence is EEEKDEAERSKRKAEESDGKTTR. The interval 402–431 is disordered; the sequence is EEEKDEAERSKRKAEESDGKTTRELTSGGL.

Belongs to the tellurite-resistance/dicarboxylate transporter (TDT) family.

The protein localises to the membrane. The chain is Putative malic acid transport protein from Schizosaccharomyces pombe (strain 972 / ATCC 24843) (Fission yeast).